Here is a 368-residue protein sequence, read N- to C-terminus: UPF0284 protein SYNPCC7002_A1742 (368 aa).

This sequence belongs to the UPF0284 family.

In Picosynechococcus sp. (strain ATCC 27264 / PCC 7002 / PR-6) (Agmenellum quadruplicatum), this protein is UPF0284 protein SYNPCC7002_A1742.